The sequence spans 461 residues: Cysteine--tRNA ligase (461 aa).

Residue Cys-28 participates in Zn(2+) binding. A 'HIGH' region motif is present at residues 30-40; sequence VTIYDLCHIGH. The Zn(2+) site is built by Cys-209, His-234, and Glu-238. The short motif at 266–270 is the 'KMSKS' region element; the sequence is KMSKS. Residue Lys-269 coordinates ATP.

The protein belongs to the class-I aminoacyl-tRNA synthetase family. As to quaternary structure, monomer. Zn(2+) serves as cofactor.

Its subcellular location is the cytoplasm. It catalyses the reaction tRNA(Cys) + L-cysteine + ATP = L-cysteinyl-tRNA(Cys) + AMP + diphosphate. The protein is Cysteine--tRNA ligase of Vibrio atlanticus (strain LGP32) (Vibrio splendidus (strain Mel32)).